The chain runs to 416 residues: Vacuole membrane protein KMS2 (416 aa).

Gly2 is subject to N-acetylglycine. The Cytoplasmic segment spans residues 2-59; the sequence is GYGNRASSKTPAISGLREKHQQDLEKLTLTSQPFKTLRLFVVAVFLYVRRWSSYLLAN. Residues 60-80 traverse the membrane as a helical segment; the sequence is VGWLILFCSIFVAFAALLVTL. At 81-100 the chain is on the lumenal side; the sequence is DGPHVKHVEELSEYTRFGLW. A helical transmembrane segment spans residues 101–123; that stretch reads WIFLGVASSIGLGSGLHTFVLYL. Residues 124-249 lie on the Cytoplasmic side of the membrane; it reads GPHIALFTIK…WLLSHSQYLN (126 aa). A helical transmembrane segment spans residues 250-270; it reads FFTILILASVPNPLFDLAGIM. Residues 271–281 are Lumenal-facing; it reads CGQFEKPFWEF. A helical transmembrane segment spans residues 282–304; the sequence is FLATLIGKAIIKTHIQTVFIICV. The Cytoplasmic portion of the chain corresponds to 305–315; the sequence is CNNQLLDWVEN. The chain crosses the membrane as a helical span at residues 316-336; sequence ELIYILSFVPGFASALPELTA. Topologically, residues 337–364 are lumenal; it reads KLRLMKEKYLIASPPVSSDINVKKWDLS. The helical transmembrane segment at 365 to 385 threads the bilayer; sequence FASVWNGVVWLMLLNFFGQIV. The Cytoplasmic segment spans residues 386-416; sequence TSTAQRYLKKQQEEELDALTNKSSLTSKKSK.

It belongs to the VMP1 family.

It localises to the endoplasmic reticulum membrane. Functionally, involved in the early secretory pathway. Required for the correct export of secretory products from the endoplasmic reticulum (ER) and involved in the maintenance of ER integrity. This Arabidopsis thaliana (Mouse-ear cress) protein is Vacuole membrane protein KMS2.